Here is an 894-residue protein sequence, read N- to C-terminus: Mitogen-activated protein kinase kinase kinase kinase 3 (894 aa).

Position 1 is an N-acetylmethionine (M1). The Protein kinase domain occupies 16–273 (FELIQRIGSG…AEKLLQHPFV (258 aa)). Residues 22–30 (IGSGTYGDV), K45, and K48 each bind ATP. The Proton acceptor role is filled by D136. Phosphoserine is present on residues S329 and S398. The disordered stretch occupies residues 410 to 536 (AHLEDDEGDD…DVPKPISNGL (127 aa)). The span at 473–487 (QVPPRPPPPRLPPHK) shows a compositional bias: pro residues. The segment covering 513–529 (NEHRGTNLSRKEKKDVP) has biased composition (basic and acidic residues). The 312-residue stretch at 556-867 (PLKIHCASSW…IFRLLGSDRV (312 aa)) folds into the CNH domain.

The protein belongs to the protein kinase superfamily. STE Ser/Thr protein kinase family. STE20 subfamily. In terms of assembly, interacts with SH3GL2. Interaction appears to regulate MAP4K3-mediated JNK activation. Mg(2+) serves as cofactor. Ubiquitously expressed in all tissues examined, with high levels in heart, brain, placenta, skeletal muscle, kidney and pancreas and lower levels in lung and liver.

The catalysed reaction is L-seryl-[protein] + ATP = O-phospho-L-seryl-[protein] + ADP + H(+). It catalyses the reaction L-threonyl-[protein] + ATP = O-phospho-L-threonyl-[protein] + ADP + H(+). In terms of biological role, serine/threonine kinase that plays a role in the response to environmental stress. Appears to act upstream of the JUN N-terminal pathway. Activator of the Hippo signaling pathway which plays a pivotal role in organ size control and tumor suppression by restricting proliferation and promoting apoptosis. MAP4Ks act in parallel to and are partially redundant with STK3/MST2 and STK4/MST2 in the phosphorylation and activation of LATS1/2, and establish MAP4Ks as components of the expanded Hippo pathway. The sequence is that of Mitogen-activated protein kinase kinase kinase kinase 3 from Homo sapiens (Human).